The following is a 287-amino-acid chain: Bifunctional protein FolD (287 aa).

Residues 166-168 (GAS) and Ile-232 contribute to the NADP(+) site.

It belongs to the tetrahydrofolate dehydrogenase/cyclohydrolase family. As to quaternary structure, homodimer.

It catalyses the reaction (6R)-5,10-methylene-5,6,7,8-tetrahydrofolate + NADP(+) = (6R)-5,10-methenyltetrahydrofolate + NADPH. The enzyme catalyses (6R)-5,10-methenyltetrahydrofolate + H2O = (6R)-10-formyltetrahydrofolate + H(+). It participates in one-carbon metabolism; tetrahydrofolate interconversion. Catalyzes the oxidation of 5,10-methylenetetrahydrofolate to 5,10-methenyltetrahydrofolate and then the hydrolysis of 5,10-methenyltetrahydrofolate to 10-formyltetrahydrofolate. The polypeptide is Bifunctional protein FolD (Buchnera aphidicola subsp. Baizongia pistaciae (strain Bp)).